The sequence spans 278 residues: Dermonecrotic toxin LlSicTox-alphaIII3iii (278 aa).

The active site involves His5. Glu25 and Asp27 together coordinate Mg(2+). The Nucleophile role is filled by His40. Cys44 and Cys50 are oxidised to a cystine. Asp84 contributes to the Mg(2+) binding site.

The protein belongs to the arthropod phospholipase D family. Class I subfamily. It depends on Mg(2+) as a cofactor. As to expression, expressed by the venom gland.

The protein resides in the secreted. The enzyme catalyses an N-(acyl)-sphingosylphosphocholine = an N-(acyl)-sphingosyl-1,3-cyclic phosphate + choline. It carries out the reaction an N-(acyl)-sphingosylphosphoethanolamine = an N-(acyl)-sphingosyl-1,3-cyclic phosphate + ethanolamine. It catalyses the reaction a 1-acyl-sn-glycero-3-phosphocholine = a 1-acyl-sn-glycero-2,3-cyclic phosphate + choline. The catalysed reaction is a 1-acyl-sn-glycero-3-phosphoethanolamine = a 1-acyl-sn-glycero-2,3-cyclic phosphate + ethanolamine. Dermonecrotic toxins cleave the phosphodiester linkage between the phosphate and headgroup of certain phospholipids (sphingolipid and lysolipid substrates), forming an alcohol (often choline) and a cyclic phosphate. This toxin acts on sphingomyelin (SM). It may also act on ceramide phosphoethanolamine (CPE), lysophosphatidylcholine (LPC) and lysophosphatidylethanolamine (LPE), but not on lysophosphatidylserine (LPS), and lysophosphatidylglycerol (LPG). It acts by transphosphatidylation, releasing exclusively cyclic phosphate products as second products. Induces dermonecrosis, hemolysis, increased vascular permeability, edema, inflammatory response, and platelet aggregation. The protein is Dermonecrotic toxin LlSicTox-alphaIII3iii of Loxosceles laeta (South American recluse spider).